Here is a 550-residue protein sequence, read N- to C-terminus: ATP synthase subunit alpha (550 aa).

172-179 contacts ATP; the sequence is GDRKTGKT. The tract at residues 514–550 is disordered; sequence EDEQRVNEPPAKPLAGEENRETVTRFRDGTTDRPAES. Positions 528 to 550 are enriched in basic and acidic residues; sequence AGEENRETVTRFRDGTTDRPAES.

The protein belongs to the ATPase alpha/beta chains family. In terms of assembly, F-type ATPases have 2 components, CF(1) - the catalytic core - and CF(0) - the membrane proton channel. CF(1) has five subunits: alpha(3), beta(3), gamma(1), delta(1), epsilon(1). CF(0) has three main subunits: a(1), b(2) and c(9-12). The alpha and beta chains form an alternating ring which encloses part of the gamma chain. CF(1) is attached to CF(0) by a central stalk formed by the gamma and epsilon chains, while a peripheral stalk is formed by the delta and b chains.

Its subcellular location is the cell membrane. The catalysed reaction is ATP + H2O + 4 H(+)(in) = ADP + phosphate + 5 H(+)(out). In terms of biological role, produces ATP from ADP in the presence of a proton gradient across the membrane. The alpha chain is a regulatory subunit. In Salinispora arenicola (strain CNS-205), this protein is ATP synthase subunit alpha.